Consider the following 202-residue polypeptide: MRMEGENWVYEVRGIPDEFFQRSEGIPMTKREIRIISLSDLRIRPGMRVMDIGCGSGSMTVEISNIIGENGSVTGLDVSGEAADLTMRNCRNLCRFSNYRIVISDVYKYDSDEEFDAVFVGGGTARIHDLFERIERMVHHASRVVVNAIQIHTAYLSLEEMNTRGYSGVNITQVMVSNGMRTSEGYAMIARNPVFIISGDAP.

Residues threonine 29, 53–57 (GCGSG), aspartate 77, and valine 106 contribute to the S-adenosyl-L-methionine site.

This sequence belongs to the methyltransferase superfamily. Archaeal-type CbiT family.

It carries out the reaction Co-precorrin-6B + S-adenosyl-L-methionine = Co-precorrin-7 + S-adenosyl-L-homocysteine + CO2. It participates in cofactor biosynthesis; adenosylcobalamin biosynthesis; cob(II)yrinate a,c-diamide from sirohydrochlorin (anaerobic route): step 8/10. Its function is as follows. Catalyzes the methylation of C-15 in cobalt-precorrin-6B followed by the decarboxylation of C-12 to form cobalt-precorrin-7. In Thermoplasma acidophilum (strain ATCC 25905 / DSM 1728 / JCM 9062 / NBRC 15155 / AMRC-C165), this protein is Probable cobalt-precorrin-6B C(15)-methyltransferase (decarboxylating).